Here is a 58-residue protein sequence, read N- to C-terminus: Ranakinin-N (58 aa).

Positions Met-1 to Cys-22 are cleaved as a signal peptide. A propeptide spanning residues Glu-23–Lys-43 is cleaved from the precursor. The disordered stretch occupies residues Lys-25–Pro-58. Residues Gly-35–Glu-46 show a composition bias toward basic and acidic residues.

As to expression, expressed by the skin glands.

The protein localises to the secreted. Its function is as follows. Induces contraction of intestinal smooth muscle in isolated guinea pig ileum. May induce relaxation of arterial smooth muscle. May target bradykinin receptors (BDKRB). Lacks antibacterial activity against the Gram-positive bacterium S.aureus and the Gram-negative bacteria E.coli and B.dysenteria, and antifungal activity against C.albicans. This chain is Ranakinin-N, found in Hylarana nigrovittata (Black-striped frog).